A 384-amino-acid polypeptide reads, in one-letter code: 4-hydroxy-3-methylbut-2-en-1-yl diphosphate synthase (flavodoxin) (384 aa).

C272, C275, C307, and E314 together coordinate [4Fe-4S] cluster.

It belongs to the IspG family. [4Fe-4S] cluster is required as a cofactor.

The catalysed reaction is (2E)-4-hydroxy-3-methylbut-2-enyl diphosphate + oxidized [flavodoxin] + H2O + 2 H(+) = 2-C-methyl-D-erythritol 2,4-cyclic diphosphate + reduced [flavodoxin]. The protein operates within isoprenoid biosynthesis; isopentenyl diphosphate biosynthesis via DXP pathway; isopentenyl diphosphate from 1-deoxy-D-xylulose 5-phosphate: step 5/6. Functionally, converts 2C-methyl-D-erythritol 2,4-cyclodiphosphate (ME-2,4cPP) into 1-hydroxy-2-methyl-2-(E)-butenyl 4-diphosphate. The polypeptide is 4-hydroxy-3-methylbut-2-en-1-yl diphosphate synthase (flavodoxin) (Rhodospirillum rubrum (strain ATCC 11170 / ATH 1.1.1 / DSM 467 / LMG 4362 / NCIMB 8255 / S1)).